The chain runs to 256 residues: Omega-amidase YafV (256 aa).

Residues L4–M234 enclose the CN hydrolase domain. The active-site Proton acceptor is the E42. Residue K107 is part of the active site. C141 serves as the catalytic Nucleophile.

This sequence belongs to the carbon-nitrogen hydrolase superfamily. NIT1/NIT2 family.

The enzyme catalyses a monoamide of a dicarboxylate + H2O = a dicarboxylate + NH4(+). In terms of biological role, hydrolyzes alpha-ketoglutaramate (a-KGM) to alpha-ketoglutarate (alpha-KG) and ammonia (specific activity 6.65 umol/min/mg), has weak activity on L-glutamine, almost no activity on deaminated glutathione (dGSH) and none on glutathione. May function as a metabolite repair enzyme. The polypeptide is Omega-amidase YafV (yafV) (Escherichia coli (strain B / BL21-DE3)).